We begin with the raw amino-acid sequence, 113 residues long: Large ribosomal subunit protein bL19 (113 aa).

Belongs to the bacterial ribosomal protein bL19 family.

In terms of biological role, this protein is located at the 30S-50S ribosomal subunit interface and may play a role in the structure and function of the aminoacyl-tRNA binding site. This is Large ribosomal subunit protein bL19 from Carboxydothermus hydrogenoformans (strain ATCC BAA-161 / DSM 6008 / Z-2901).